Here is a 150-residue protein sequence, read N- to C-terminus: Ribosome-binding factor A (150 aa).

A disordered region spans residues 126 to 150 (EVARDLSHDDDEDGGADEAPRNGDE).

The protein belongs to the RbfA family. Monomer. Binds 30S ribosomal subunits, but not 50S ribosomal subunits or 70S ribosomes.

It is found in the cytoplasm. In terms of biological role, one of several proteins that assist in the late maturation steps of the functional core of the 30S ribosomal subunit. Associates with free 30S ribosomal subunits (but not with 30S subunits that are part of 70S ribosomes or polysomes). Required for efficient processing of 16S rRNA. May interact with the 5'-terminal helix region of 16S rRNA. The protein is Ribosome-binding factor A of Brucella suis (strain ATCC 23445 / NCTC 10510).